Reading from the N-terminus, the 559-residue chain is Endoglin (559 aa).

Residues Met-1–Ala-20 form the signal peptide. Residues Ser-21–Val-473 lie on the Extracellular side of the membrane. Disulfide bonds link Cys-25/Cys-201 and Cys-47/Cys-174. Residues Asn-55, Asn-79, Asn-109, Asn-133, Asn-170, Asn-302, and Asn-352 are each glycosylated (N-linked (GlcNAc...) asparagine). Cysteines 381 and 427 form a disulfide. Residues Leu-474–Ile-494 traverse the membrane as a helical segment. The Cytoplasmic segment spans residues Lys-495–Ala-559. Positions Arg-528 to Ala-559 are disordered. The span at Ser-536–Ser-546 shows a compositional bias: low complexity. Residues Ile-547–Ala-559 show a composition bias toward polar residues.

As to quaternary structure, homodimer; disulfide-linked.

It localises to the cell membrane. Vascular endothelium glycoprotein that plays an important role in the regulation of angiogenesis. Required for normal structure and integrity of adult vasculature. Important for endothelial cell shape changes in response to blood flow, which drive vascular remodeling and establishment of normal vascular morphology during angiogenesis. This Danio rerio (Zebrafish) protein is Endoglin.